The chain runs to 1040 residues: Exosome RNA helicase MTR4 (1040 aa).

A2 is subject to N-acetylalanine. A disordered region spans residues 16–77; the sequence is DSTSAAGAKK…GTDEPIFGKK (62 aa). Over residues 23–33 the composition is skewed to basic and acidic residues; the sequence is AKKDKEKEKWK. A Glycyl lysine isopeptide (Lys-Gly) (interchain with G-Cter in SUMO2) cross-link involves residue K24. A Phosphoserine modification is found at S38. Residues 41 to 50 are compositionally biased toward basic and acidic residues; sequence KAGKRLDTKL. N6-acetyllysine occurs at positions 49 and 76. ATP is bound by residues I137, 159–166, S162, G164, K165, and T166; that span reads AHTSAGKT. Positions 146–302 constitute a Helicase ATP-binding domain; it reads IQCVDNNQSV…WICHLHKQPC (157 aa). Residues 250–253 carry the DEIH box motif; it reads DEIH. Residue K356 forms a Glycyl lysine isopeptide (Lys-Gly) (interchain with G-Cter in SUMO2) linkage. The region spanning 403 to 575 is the Helicase C-terminal domain; the sequence is QMTKLDFNTD…NMVLNLLRVE (173 aa). Residues K682 and K721 each participate in a glycyl lysine isopeptide (Lys-Gly) (interchain with G-Cter in SUMO2) cross-link.

Belongs to the helicase family. SKI2 subfamily. Component of a TRAMP-like complex, an ATP-dependent exosome regulatory complex consisting of a helicase (MTREX), an oligadenylate polymerase (TENT4B or TENT4A), and a substrate specific RNA-binding factor (ZCCHC7 or ZCCHC8). Several TRAMP-like complexes exist with specific compositions and are associated with nuclear, or nucleolar RNA exosomes. Identified in the spliceosome C complex. Component of the poly(A) tail exosome targeting (PAXT) complex made of PABPN1, ZFC3H1 and MTREX that directs a subset of long and polyadenylated poly(A) RNAs for exosomal degradation. Component of the nuclear exosome targeting (NEXT) complex composed of MTREX, ZCCHC8, and RBM7 that directs a subset of non-coding short-lived RNAs for exosomal degradation. Interacts with ZCCHC8; this interaction bridges the interaction between RBM7 and MTREX. Binds to ZFC3H1 and RBM7 in a RNase-insensitive manner. Interacts with EXOSC10; the interaction mediates the association of MTREX with nuclear RNA exosomes. Interacts with isoform 1 of NVL in an ATP-dependent manner; the interaction is required to associate NVL with nuclear RNA exosome. Interacts with WDR74; the interaction dissociation in a late stage of rRNA synthesis is required for appropriate maturation of pre-60S particles and depends on the ATPase activity of NVL. Interacts with MPHOSPH6. Interacts with the RNA cap-binding complex proteins NCBP1 and SRRT. Interacts with NRDE2; the interaction is direct and negatively regulates MTREX function in exosomal degradation by changing its conformation precluding interaction with ZFC3H1, the RNA cap-binding complex proteins NCBP1 and SRRT, and association with the exosome. Associates with the RNA exosome complex.

Its subcellular location is the nucleus. The protein localises to the nucleoplasm. It localises to the nucleolus. It is found in the nucleus speckle. The enzyme catalyses ATP + H2O = ADP + phosphate + H(+). Activated when MTREX is incorporated into NEXT complex an the nuclear RNA exosome complex. Its function is as follows. Catalyzes the ATP-dependent unwinding of RNA duplexes with a single-stranded 3' RNA extension. Central subunit of many protein complexes, namely TRAMP-like, nuclear exosome targeting (NEXT) and poly(A) tail exosome targeting (PAXT). NEXT functions as an RNA exosome cofactor that directs a subset of non-coding short-lived RNAs for exosomal degradation. NEXT is involved in surveillance and turnover of aberrant transcripts and non-coding RNAs. PAXT directs a subset of long and polyadenylated poly(A) RNAs for exosomal degradation. The RNA exosome is fundamental for the degradation of RNA in eukaryotic nuclei. Substrate targeting is facilitated by its cofactor ZCCHC8, which links to RNA-binding protein adapters. Associated with the RNA exosome complex and involved in the 3'-processing of the 7S pre-RNA to the mature 5.8S rRNA. May be involved in pre-mRNA splicing. In the context of NEXT complex can also in vitro unwind DNA:RNA heteroduplexes with a 3' poly (A) RNA tracking strand. Can promote unwinding and degradation of structured RNA substrates when associated with the nuclear exosome and its cofactors. Can displace a DNA strand while translocating on RNA to ultimately degrade the RNA within a DNA/RNA heteroduplex. Plays a role in DNA damage response. This chain is Exosome RNA helicase MTR4, found in Mus musculus (Mouse).